We begin with the raw amino-acid sequence, 119 residues long: uncharacterized protein (119 aa).

A coiled-coil region spans residues 63–104; the sequence is KKIKKELESNSEKRKAALQMIKEEHTAKVDRYKMIIEDLRQQ.

This is an uncharacterized protein from Bacillus subtilis (strain 168).